The sequence spans 216 residues: Kynurenine formamidase (216 aa).

Trp-25 lines the substrate pocket. Zn(2+)-binding residues include His-55, His-59, and Asp-61. His-65 serves as the catalytic Proton donor/acceptor. Zn(2+) is bound by residues His-167 and Glu-179.

Belongs to the Cyclase 1 superfamily. KynB family. In terms of assembly, homodimer. Zn(2+) is required as a cofactor.

The catalysed reaction is N-formyl-L-kynurenine + H2O = L-kynurenine + formate + H(+). It participates in amino-acid degradation; L-tryptophan degradation via kynurenine pathway; L-kynurenine from L-tryptophan: step 2/2. Its function is as follows. Catalyzes the hydrolysis of N-formyl-L-kynurenine to L-kynurenine, the second step in the kynurenine pathway of tryptophan degradation. In Cupriavidus necator (strain ATCC 17699 / DSM 428 / KCTC 22496 / NCIMB 10442 / H16 / Stanier 337) (Ralstonia eutropha), this protein is Kynurenine formamidase.